A 119-amino-acid chain; its full sequence is NADH-quinone oxidoreductase subunit A (119 aa).

3 consecutive transmembrane segments (helical) span residues 9–29, 63–83, and 88–108; these read IFLF…LGYI, LVAI…PWAV, and IGAL…VGFI.

This sequence belongs to the complex I subunit 3 family. In terms of assembly, NDH-1 is composed of 14 different subunits. Subunits NuoA, H, J, K, L, M, N constitute the membrane sector of the complex.

The protein resides in the cell inner membrane. It catalyses the reaction a quinone + NADH + 5 H(+)(in) = a quinol + NAD(+) + 4 H(+)(out). Functionally, NDH-1 shuttles electrons from NADH, via FMN and iron-sulfur (Fe-S) centers, to quinones in the respiratory chain. The immediate electron acceptor for the enzyme in this species is believed to be ubiquinone. Couples the redox reaction to proton translocation (for every two electrons transferred, four hydrogen ions are translocated across the cytoplasmic membrane), and thus conserves the redox energy in a proton gradient. This Albidiferax ferrireducens (strain ATCC BAA-621 / DSM 15236 / T118) (Rhodoferax ferrireducens) protein is NADH-quinone oxidoreductase subunit A.